We begin with the raw amino-acid sequence, 321 residues long: F420-non-reducing hydrogenase iron-sulfur subunit G (321 aa).

It belongs to the [NiFe]/[NiFeSe] hydrogenase small subunit family. The F420-non-reducing hydrogenase is composed of three subunits; MvhA, MvhD and MvhG. It forms a complex with the heterodisulfide reductase (Hdr).

The protein localises to the cytoplasm. In terms of biological role, part of a complex that provides reducing equivalents for heterodisulfide reductase. The chain is F420-non-reducing hydrogenase iron-sulfur subunit G (mvhG) from Archaeoglobus profundus (strain DSM 5631 / JCM 9629 / NBRC 100127 / Av18).